We begin with the raw amino-acid sequence, 198 residues long: Nucleoid occlusion factor SlmA (198 aa).

Positions 10–70 constitute an HTH tetR-type domain; sequence NRREEILQSL…SLIEFIEDSL (61 aa). The segment at residues 33–52 is a DNA-binding region (H-T-H motif); that stretch reads TTAKLAASVGVSEAALYRHF. Residues 117-144 adopt a coiled-coil conformation; it reads EQDRLQGRINQLFERIEAQLRQVLREKR.

This sequence belongs to the nucleoid occlusion factor SlmA family. As to quaternary structure, homodimer. Interacts with FtsZ.

It is found in the cytoplasm. It localises to the nucleoid. In terms of biological role, required for nucleoid occlusion (NO) phenomenon, which prevents Z-ring formation and cell division over the nucleoid. Acts as a DNA-associated cell division inhibitor that binds simultaneously chromosomal DNA and FtsZ, and disrupts the assembly of FtsZ polymers. SlmA-DNA-binding sequences (SBS) are dispersed on non-Ter regions of the chromosome, preventing FtsZ polymerization at these regions. The polypeptide is Nucleoid occlusion factor SlmA (Escherichia coli O45:K1 (strain S88 / ExPEC)).